Here is a 350-residue protein sequence, read N- to C-terminus: Phosphotriesterase-related protein (350 aa).

Positions 22, 24, 169, 201, 230, and 298 each coordinate a divalent metal cation.

Belongs to the metallo-dependent hydrolases superfamily. Phosphotriesterase family. A divalent metal cation is required as a cofactor.

This chain is Phosphotriesterase-related protein, found in Drosophila mojavensis (Fruit fly).